Reading from the N-terminus, the 86-residue chain is Small ribosomal subunit protein uS15 (86 aa).

Residues 1 to 22 (MSIDTQKVIEDNKRSSADTGSP) form a disordered region. Residues 7–16 (KVIEDNKRSS) are compositionally biased toward basic and acidic residues.

The protein belongs to the universal ribosomal protein uS15 family. In terms of assembly, part of the 30S ribosomal subunit. Forms a bridge to the 50S subunit in the 70S ribosome, contacting the 23S rRNA.

In terms of biological role, one of the primary rRNA binding proteins, it binds directly to 16S rRNA where it helps nucleate assembly of the platform of the 30S subunit by binding and bridging several RNA helices of the 16S rRNA. Forms an intersubunit bridge (bridge B4) with the 23S rRNA of the 50S subunit in the ribosome. This is Small ribosomal subunit protein uS15 from Stenotrophomonas maltophilia (strain R551-3).